A 779-amino-acid chain; its full sequence is Beta-galactosidase 15 (779 aa).

The N-terminal stretch at 1 to 19 (MVSLSFILCCVLVSSCAYA) is a signal peptide. Residue asparagine 148 is glycosylated (N-linked (GlcNAc...) asparagine). Glutamate 178 functions as the Proton donor in the catalytic mechanism. Glutamate 247 (nucleophile) is an active-site residue. 6 N-linked (GlcNAc...) asparagine glycosylation sites follow: asparagine 248, asparagine 345, asparagine 374, asparagine 489, asparagine 495, and asparagine 555. In terms of domain architecture, SUEL-type lectin spans 694-779 (VYEKNVLELS…AKRLAVEAIC (86 aa)).

It belongs to the glycosyl hydrolase 35 family. In terms of tissue distribution, ubiquitous, with higher levels in roots and siliques.

It localises to the secreted. The protein resides in the extracellular space. Its subcellular location is the apoplast. It catalyses the reaction Hydrolysis of terminal non-reducing beta-D-galactose residues in beta-D-galactosides.. This is Beta-galactosidase 15 (BGAL15) from Arabidopsis thaliana (Mouse-ear cress).